A 351-amino-acid chain; its full sequence is Ribosomal RNA large subunit methyltransferase N (351 aa).

Catalysis depends on E92, which acts as the Proton acceptor. The 233-residue stretch at 105–337 (GHPRSTICVS…CTVRVEKGTE (233 aa)) folds into the Radical SAM core domain. A disulfide bond links C112 and C342. The [4Fe-4S] cluster site is built by C119, C123, and C126. Residues 169–170 (GE), S201, 224–226 (SLH), and N300 contribute to the S-adenosyl-L-methionine site. C342 serves as the catalytic S-methylcysteine intermediate.

This sequence belongs to the radical SAM superfamily. RlmN family. [4Fe-4S] cluster serves as cofactor.

It localises to the cytoplasm. It carries out the reaction adenosine(2503) in 23S rRNA + 2 reduced [2Fe-2S]-[ferredoxin] + 2 S-adenosyl-L-methionine = 2-methyladenosine(2503) in 23S rRNA + 5'-deoxyadenosine + L-methionine + 2 oxidized [2Fe-2S]-[ferredoxin] + S-adenosyl-L-homocysteine. Specifically methylates position 2 of adenine 2503 in 23S rRNA. This is Ribosomal RNA large subunit methyltransferase N from Nitrosopumilus maritimus (strain SCM1).